A 123-amino-acid polypeptide reads, in one-letter code: Galanin peptides (123 aa).

Residues 1–19 form the signal peptide; the sequence is MARGSALLLASLLLAAALS. Residues 20-30 constitute a propeptide that is removed on maturation; that stretch reads ASAGLWSPAKE. The disordered stretch occupies residues 46 to 80; sequence HAVGNHRSFSDKNGLTSKRELRPEDDMKPGSFDRS. Over residues 62-73 the composition is skewed to basic and acidic residues; the sequence is SKRELRPEDDMK. 2 positions are modified to phosphoserine: S116 and S117.

It belongs to the galanin family.

The protein localises to the secreted. Its function is as follows. Endocrine hormone of the central and peripheral nervous systems that binds and activates the G protein-coupled receptors GALR1, GALR2, and GALR3. This small neuropeptide may regulate diverse physiologic functions including contraction of smooth muscle of the gastrointestinal and genitourinary tract, growth hormone and insulin release and adrenal secretion. This is Galanin peptides (GAL) from Homo sapiens (Human).